The chain runs to 262 residues: Zinc import ATP-binding protein ZnuC (262 aa).

The region spanning 6–221 is the ABC transporter domain; sequence IRLDKVAVTL…PAFVELFGKN (216 aa). Position 38-45 (38-45) interacts with ATP; the sequence is GPNGAGKT.

It belongs to the ABC transporter superfamily. Zinc importer (TC 3.A.1.15.5) family. As to quaternary structure, the complex is composed of two ATP-binding proteins (ZnuC), two transmembrane proteins (ZnuB) and a solute-binding protein (ZnuA).

It localises to the cell inner membrane. It carries out the reaction Zn(2+)(out) + ATP(in) + H2O(in) = Zn(2+)(in) + ADP(in) + phosphate(in) + H(+)(in). In terms of biological role, part of the ABC transporter complex ZnuABC involved in zinc import. Responsible for energy coupling to the transport system. The protein is Zinc import ATP-binding protein ZnuC of Pseudomonas syringae pv. syringae (strain B728a).